We begin with the raw amino-acid sequence, 621 residues long: Chaperone protein DnaK (621 aa).

Position 202 is a phosphothreonine; by autocatalysis (threonine 202). The tract at residues 596–621 (SQFAQAAKQNEEKKEEDKKDSEESKN) is disordered. Residues 604-621 (QNEEKKEEDKKDSEESKN) show a composition bias toward basic and acidic residues.

Belongs to the heat shock protein 70 family.

Acts as a chaperone. In Malacoplasma penetrans (strain HF-2) (Mycoplasma penetrans), this protein is Chaperone protein DnaK.